We begin with the raw amino-acid sequence, 136 residues long: ATP synthase epsilon chain (136 aa).

The protein belongs to the ATPase epsilon chain family. F-type ATPases have 2 components, CF(1) - the catalytic core - and CF(0) - the membrane proton channel. CF(1) has five subunits: alpha(3), beta(3), gamma(1), delta(1), epsilon(1). CF(0) has three main subunits: a, b and c.

It is found in the cell membrane. Produces ATP from ADP in the presence of a proton gradient across the membrane. The sequence is that of ATP synthase epsilon chain from Ureaplasma parvum serovar 3 (strain ATCC 27815 / 27 / NCTC 11736).